A 231-amino-acid polypeptide reads, in one-letter code: MIP18 family protein YHR122W (231 aa).

Disordered regions lie at residues 1-26 (MSEF…DSTK) and 75-100 (LTSD…EEEE). Position 2 is an N-acetylserine (Ser-2). Residues 76–90 (TSDEDSLPAESEDES) show a composition bias toward acidic residues.

This sequence belongs to the MIP18 family.

May play a role in chromosome segregation through establishment of sister chromatid cohesion. This is MIP18 family protein YHR122W from Saccharomyces cerevisiae (strain ATCC 204508 / S288c) (Baker's yeast).